The following is a 244-amino-acid chain: Phosphoadenosine 5'-phosphosulfate reductase (244 aa).

Catalysis depends on Cys-239, which acts as the Nucleophile; cysteine thiosulfonate intermediate.

It belongs to the PAPS reductase family. CysH subfamily.

The protein localises to the cytoplasm. It carries out the reaction [thioredoxin]-disulfide + sulfite + adenosine 3',5'-bisphosphate + 2 H(+) = [thioredoxin]-dithiol + 3'-phosphoadenylyl sulfate. It participates in sulfur metabolism; hydrogen sulfide biosynthesis; sulfite from sulfate: step 3/3. Functionally, catalyzes the formation of sulfite from phosphoadenosine 5'-phosphosulfate (PAPS) using thioredoxin as an electron donor. This Escherichia coli (strain K12 / MC4100 / BW2952) protein is Phosphoadenosine 5'-phosphosulfate reductase.